Here is a 59-residue protein sequence, read N- to C-terminus: Small ribosomal subunit protein bS21 (59 aa).

Belongs to the bacterial ribosomal protein bS21 family.

The chain is Small ribosomal subunit protein bS21 from Acholeplasma laidlawii (strain PG-8A).